The primary structure comprises 146 residues: uncharacterized protein (146 aa).

Residues 7–27 (FVLSITIVLVILIIIAFIWYN) form a helical membrane-spanning segment.

Belongs to the asfivirus E146L family.

It is found in the host membrane. The protein localises to the virion. This is an uncharacterized protein from Ornithodoros (relapsing fever ticks).